A 280-amino-acid chain; its full sequence is 4-hydroxy-3-methylbut-2-enyl diphosphate reductase (280 aa).

Position 12 (cysteine 12) interacts with [4Fe-4S] cluster. 2 residues coordinate (2E)-4-hydroxy-3-methylbut-2-enyl diphosphate: histidine 40 and histidine 72. Dimethylallyl diphosphate contacts are provided by histidine 40 and histidine 72. Positions 40 and 72 each coordinate isopentenyl diphosphate. [4Fe-4S] cluster is bound at residue cysteine 94. Histidine 122 lines the (2E)-4-hydroxy-3-methylbut-2-enyl diphosphate pocket. Dimethylallyl diphosphate is bound at residue histidine 122. Isopentenyl diphosphate is bound at residue histidine 122. Glutamate 124 acts as the Proton donor in catalysis. Threonine 160 contacts (2E)-4-hydroxy-3-methylbut-2-enyl diphosphate. Residue cysteine 188 participates in [4Fe-4S] cluster binding. Residues serine 216, asparagine 218, and serine 260 each coordinate (2E)-4-hydroxy-3-methylbut-2-enyl diphosphate. Dimethylallyl diphosphate is bound by residues serine 216, asparagine 218, and serine 260. The isopentenyl diphosphate site is built by serine 216, asparagine 218, and serine 260.

This sequence belongs to the IspH family. It depends on [4Fe-4S] cluster as a cofactor.

It carries out the reaction isopentenyl diphosphate + 2 oxidized [2Fe-2S]-[ferredoxin] + H2O = (2E)-4-hydroxy-3-methylbut-2-enyl diphosphate + 2 reduced [2Fe-2S]-[ferredoxin] + 2 H(+). The catalysed reaction is dimethylallyl diphosphate + 2 oxidized [2Fe-2S]-[ferredoxin] + H2O = (2E)-4-hydroxy-3-methylbut-2-enyl diphosphate + 2 reduced [2Fe-2S]-[ferredoxin] + 2 H(+). Its pathway is isoprenoid biosynthesis; dimethylallyl diphosphate biosynthesis; dimethylallyl diphosphate from (2E)-4-hydroxy-3-methylbutenyl diphosphate: step 1/1. It participates in isoprenoid biosynthesis; isopentenyl diphosphate biosynthesis via DXP pathway; isopentenyl diphosphate from 1-deoxy-D-xylulose 5-phosphate: step 6/6. In terms of biological role, catalyzes the conversion of 1-hydroxy-2-methyl-2-(E)-butenyl 4-diphosphate (HMBPP) into a mixture of isopentenyl diphosphate (IPP) and dimethylallyl diphosphate (DMAPP). Acts in the terminal step of the DOXP/MEP pathway for isoprenoid precursor biosynthesis. This Pelobacter propionicus (strain DSM 2379 / NBRC 103807 / OttBd1) protein is 4-hydroxy-3-methylbut-2-enyl diphosphate reductase.